Consider the following 223-residue polypeptide: Putative germin-like protein subfamily 1 member 12 (223 aa).

The signal sequence occupies residues 1-24; the sequence is MNMKNLYLAILYLLAASTLPFAIA. Cys34 and Cys51 are joined by a disulfide. Residues 65-216 enclose the Cupin type-1 domain; it reads SGLDKARTTE…AFQLDPKVII (152 aa). Residue Asn81 is glycosylated (N-linked (GlcNAc...) asparagine). Mn(2+) is bound by residues His114, His116, and Glu121. The N-linked (GlcNAc...) asparagine glycan is linked to Asn145. His162 lines the Mn(2+) pocket.

This sequence belongs to the germin family. In terms of assembly, oligomer (believed to be a pentamer but probably hexamer).

The protein resides in the secreted. The protein localises to the extracellular space. It localises to the apoplast. Its function is as follows. May play a role in plant defense. Probably has no oxalate oxidase activity even if the active site is conserved. This Arabidopsis thaliana (Mouse-ear cress) protein is Putative germin-like protein subfamily 1 member 12.